We begin with the raw amino-acid sequence, 500 residues long: NAD(P)H-quinone oxidoreductase chain 4, chloroplastic (500 aa).

The next 14 helical transmembrane spans lie at 4 to 24 (FPWL…LFFL), 35 to 55 (YTLC…CYHF), 87 to 107 (FGPI…AWPV), 134 to 154 (LLLF…LLSM), 167 to 187 (FILY…GIGL), 208 to 228 (ALEI…SPII), 242 to 262 (HYST…YGLV), 272 to 292 (AHSI…VYAA), 305 to 325 (IAYS…SITD), 330 to 350 (GALL…FLAG), 364 to 384 (MGGM…LSMA), 386 to 406 (LALP…GIIT), 416 to 436 (ILIT…SLSM), and 462 to 482 (LFVS…PDFL).

Belongs to the complex I subunit 4 family.

The protein resides in the plastid. It localises to the chloroplast thylakoid membrane. It carries out the reaction a plastoquinone + NADH + (n+1) H(+)(in) = a plastoquinol + NAD(+) + n H(+)(out). It catalyses the reaction a plastoquinone + NADPH + (n+1) H(+)(in) = a plastoquinol + NADP(+) + n H(+)(out). This chain is NAD(P)H-quinone oxidoreductase chain 4, chloroplastic, found in Pelargonium hortorum (Common geranium).